Here is a 274-residue protein sequence, read N- to C-terminus: Large ribosomal subunit protein uL2 (274 aa).

Disordered stretches follow at residues 35–55 and 224–274; these read FGKK…RHRG and AMNP…KLKG. Positions 45–55 are enriched in basic residues; sequence NHGRITTRHRG. The segment covering 263–274 has biased composition (basic and acidic residues); that stretch reads KSSDKYIKKLKG.

Belongs to the universal ribosomal protein uL2 family. Part of the 50S ribosomal subunit. Forms a bridge to the 30S subunit in the 70S ribosome.

Functionally, one of the primary rRNA binding proteins. Required for association of the 30S and 50S subunits to form the 70S ribosome, for tRNA binding and peptide bond formation. It has been suggested to have peptidyltransferase activity; this is somewhat controversial. Makes several contacts with the 16S rRNA in the 70S ribosome. This is Large ribosomal subunit protein uL2 from Wolbachia pipientis subsp. Culex pipiens (strain wPip).